The chain runs to 108 residues: MPAQGHRLYVKAKHLSFQRSKHVIHPGTSLVKIEGCDSKEEAQFYLGKRICFVYKSNKPVRGSKIRVIWGTVSRPHGNSGVVRARFTHNLPPKTFGASLRVMLYPSNV.

Belongs to the eukaryotic ribosomal protein eL33 family. As to quaternary structure, component of the large ribosomal subunit (LSU). Mature yeast ribosomes consist of a small (40S) and a large (60S) subunit. The 40S small subunit contains 1 molecule of ribosomal RNA (18S rRNA) and at least 33 different proteins. The large 60S subunit contains 3 rRNA molecules (25S, 5.8S and 5S rRNA) and at least 46 different proteins.

Its subcellular location is the cytoplasm. It is found in the nucleus. The protein resides in the nucleolus. Its function is as follows. Component of the ribosome, a large ribonucleoprotein complex responsible for the synthesis of proteins in the cell. The small ribosomal subunit (SSU) binds messenger RNAs (mRNAs) and translates the encoded message by selecting cognate aminoacyl-transfer RNA (tRNA) molecules. The large subunit (LSU) contains the ribosomal catalytic site termed the peptidyl transferase center (PTC), which catalyzes the formation of peptide bonds, thereby polymerizing the amino acids delivered by tRNAs into a polypeptide chain. The nascent polypeptides leave the ribosome through a tunnel in the LSU and interact with protein factors that function in enzymatic processing, targeting, and the membrane insertion of nascent chains at the exit of the ribosomal tunnel. This Schizosaccharomyces pombe (strain 972 / ATCC 24843) (Fission yeast) protein is Large ribosomal subunit protein eL33A (rpl35b).